The following is a 297-amino-acid chain: MKKLDPIIEQFLDTLWLEQSLSHNTLLSYRLDLELFSAWLVEPRAFLTLTHTDLQLFLGDRLDKGYKSSSSARIISCLRKFFRFLCLEKYRLDDPTSMLISPRKRVQLPKSLSEEQVMDLLDAPNPLDPIELRDKAMLELLYATGLRVTELISLTIDNLNLRQGVVRVIGKGDKERLVPIGEEASYWIQEFFDYGRMILLSDQQSDVLFPSRRAKQMTRQTFWHRIKYYAILAGIDAEKLSPHVLRHAFATHLINHGADLRVVQMLLGHSDLSTTQIYTHVAKTRLKSIHKQFHPRG.

The region spanning 2 to 86 is the Core-binding (CB) domain; it reads KKLDPIIEQF…CLRKFFRFLC (85 aa). Residues 107-291 form the Tyr recombinase domain; the sequence is QLPKSLSEEQ…AKTRLKSIHK (185 aa). Residues R147, K171, H243, R246, and H269 contribute to the active site. Y278 acts as the O-(3'-phospho-DNA)-tyrosine intermediate in catalysis.

Belongs to the 'phage' integrase family. XerD subfamily. In terms of assembly, forms a cyclic heterotetrameric complex composed of two molecules of XerC and two molecules of XerD.

It localises to the cytoplasm. Site-specific tyrosine recombinase, which acts by catalyzing the cutting and rejoining of the recombining DNA molecules. The XerC-XerD complex is essential to convert dimers of the bacterial chromosome into monomers to permit their segregation at cell division. It also contributes to the segregational stability of plasmids. This chain is Tyrosine recombinase XerD, found in Haemophilus ducreyi (strain 35000HP / ATCC 700724).